We begin with the raw amino-acid sequence, 247 residues long: Carboxy-S-adenosyl-L-methionine synthase (247 aa).

Residues Tyr39, 64–66 (GCS), 89–90 (DN), 117–118 (DI), Asn132, and Arg199 contribute to the S-adenosyl-L-methionine site.

The protein belongs to the class I-like SAM-binding methyltransferase superfamily. Cx-SAM synthase family. Homodimer.

The enzyme catalyses prephenate + S-adenosyl-L-methionine = carboxy-S-adenosyl-L-methionine + 3-phenylpyruvate + H2O. In terms of biological role, catalyzes the conversion of S-adenosyl-L-methionine (SAM) to carboxy-S-adenosyl-L-methionine (Cx-SAM). In Escherichia coli O139:H28 (strain E24377A / ETEC), this protein is Carboxy-S-adenosyl-L-methionine synthase.